The chain runs to 221 residues: H-2 class II histocompatibility antigen, A-Q alpha chain (221 aa).

Positions 1–76 (GIVVYQSPGD…KRSNFTPATN (76 aa)) are alpha-1. Over 1 to 183 (GIVVYQSPGD…IPAPMSELTE (183 aa)) the chain is Extracellular. The alpha-2 stretch occupies residues 77-170 (EAPQATVFPK…GLDEPVLKHW (94 aa)). The Ig-like C1-type domain maps to 79–171 (PQATVFPKSP…LDEPVLKHWE (93 aa)). Residues Cys-99 and Cys-155 are joined by a disulfide bond. Residue Asn-110 is glycosylated (N-linked (GlcNAc...) asparagine). Positions 171–183 (EPEIPAPMSELTE) are connecting peptide. Residues 184–209 (TVVCALGLSVGLVGIVVGTIFIIQGL) form a helical membrane-spanning segment. At 210–221 (RSGGTSRPPGPL) the chain is on the cytoplasmic side.

This sequence belongs to the MHC class II family.

It is found in the membrane. This is H-2 class II histocompatibility antigen, A-Q alpha chain (H2-Aa) from Mus musculus (Mouse).